Here is a 201-residue protein sequence, read N- to C-terminus: Cutinase (201 aa).

The signal sequence occupies residues 1-20 (MKTSAQQLLSLLLLPLSAIA). Cys-31 and Cys-105 are disulfide-bonded. The active-site Nucleophile is the Ser-116. Cys-164 and Cys-171 are disulfide-bonded. Asp-168 is an active-site residue. His-181 acts as the Proton donor/acceptor in catalysis.

The protein belongs to the cutinase family. The 2 disulfide bonds play a critical role in holding the catalytic residues in juxta-position; reduction of the disulfide bridges results in the complete inactivation of the enzyme.

The protein resides in the secreted. The enzyme catalyses cutin + H2O = cutin monomers.. Functionally, catalyzes the hydrolysis of complex carboxylic polyesters found in the cell wall of plants. Degrades cutin, a macromolecule that forms the structure of the plant cuticle. Allows pathogenic fungi to penetrate through the cuticular barrier into the host plant during the initial stage of fungal infection. This is Cutinase (CUT1) from Monilinia fructicola (Brown rot fungus).